We begin with the raw amino-acid sequence, 238 residues long: Ribonuclease M (238 aa).

5 disulfides stabilise this stretch: cysteine 5/cysteine 22, cysteine 13/cysteine 58, cysteine 21/cysteine 126, cysteine 66/cysteine 118, and cysteine 191/cysteine 225. The active site involves histidine 51. Residue asparagine 74 is glycosylated (N-linked (GlcNAc...) asparagine). Residues glutamate 111 and histidine 115 contribute to the active site.

It belongs to the RNase T2 family.

It carries out the reaction a ribonucleotidyl-ribonucleotide-RNA + H2O = a 3'-end 3'-phospho-ribonucleotide-RNA + a 5'-end dephospho-ribonucleoside-RNA + H(+). Its function is as follows. This is a base non-specific and adenylic acid preferential ribonuclease. The chain is Ribonuclease M from Aspergillus phoenicis (Aspergillus saitoi).